The chain runs to 401 residues: Phosphoglycerate kinase (401 aa).

Substrate contacts are provided by residues 21 to 23, Arg36, 59 to 62, Arg119, and Arg160; these read DFN and HLGR. ATP contacts are provided by residues Lys212, Glu330, and 357–360; that span reads GGDS.

It belongs to the phosphoglycerate kinase family. As to quaternary structure, monomer.

The protein resides in the cytoplasm. The enzyme catalyses (2R)-3-phosphoglycerate + ATP = (2R)-3-phospho-glyceroyl phosphate + ADP. It functions in the pathway carbohydrate degradation; glycolysis; pyruvate from D-glyceraldehyde 3-phosphate: step 2/5. This is Phosphoglycerate kinase from Limosilactobacillus reuteri subsp. reuteri (strain JCM 1112) (Lactobacillus reuteri).